Consider the following 319-residue polypeptide: tRNA U34 carboxymethyltransferase (319 aa).

Carboxy-S-adenosyl-L-methionine is bound by residues Lys88, Trp102, Lys107, Gly126, 176 to 177 (LE), Met192, Tyr196, and Arg311.

The protein belongs to the class I-like SAM-binding methyltransferase superfamily. CmoB family. Homotetramer.

It carries out the reaction carboxy-S-adenosyl-L-methionine + 5-hydroxyuridine(34) in tRNA = 5-carboxymethoxyuridine(34) in tRNA + S-adenosyl-L-homocysteine + H(+). Its function is as follows. Catalyzes carboxymethyl transfer from carboxy-S-adenosyl-L-methionine (Cx-SAM) to 5-hydroxyuridine (ho5U) to form 5-carboxymethoxyuridine (cmo5U) at position 34 in tRNAs. In Pseudomonas savastanoi pv. phaseolicola (strain 1448A / Race 6) (Pseudomonas syringae pv. phaseolicola (strain 1448A / Race 6)), this protein is tRNA U34 carboxymethyltransferase.